The sequence spans 331 residues: UDP-glucose 4-epimerase (331 aa).

Residues 11-12 (YI), 31-36 (DNLITG), 51-52 (DI), 73-77 (FAAFS), Asn92, Thr117, Tyr141, Lys145, and Phe169 contribute to the NAD(+) site. 2 residues coordinate substrate: Thr117 and Tyr141. Catalysis depends on Tyr141, which acts as the Proton acceptor. Residues Asn170, 189–190 (HI), 206–208 (QIY), Arg221, and 282–285 (RAGD) contribute to the substrate site.

The protein belongs to the NAD(P)-dependent epimerase/dehydratase family. As to quaternary structure, homodimer. Requires NAD(+) as cofactor.

It catalyses the reaction UDP-alpha-D-glucose = UDP-alpha-D-galactose. The protein operates within carbohydrate metabolism; galactose metabolism. This is UDP-glucose 4-epimerase (galE) from Lacticaseibacillus casei (Lactobacillus casei).